The sequence spans 305 residues: UDP-3-O-acyl-N-acetylglucosamine deacetylase (305 aa).

Zn(2+) contacts are provided by His-78, His-235, and Asp-239. Catalysis depends on His-262, which acts as the Proton donor.

This sequence belongs to the LpxC family. It depends on Zn(2+) as a cofactor.

The enzyme catalyses a UDP-3-O-[(3R)-3-hydroxyacyl]-N-acetyl-alpha-D-glucosamine + H2O = a UDP-3-O-[(3R)-3-hydroxyacyl]-alpha-D-glucosamine + acetate. The protein operates within glycolipid biosynthesis; lipid IV(A) biosynthesis; lipid IV(A) from (3R)-3-hydroxytetradecanoyl-[acyl-carrier-protein] and UDP-N-acetyl-alpha-D-glucosamine: step 2/6. In terms of biological role, catalyzes the hydrolysis of UDP-3-O-myristoyl-N-acetylglucosamine to form UDP-3-O-myristoylglucosamine and acetate, the committed step in lipid A biosynthesis. The protein is UDP-3-O-acyl-N-acetylglucosamine deacetylase of Geobacter sp. (strain M21).